Here is a 253-residue protein sequence, read N- to C-terminus: Imidazole glycerol phosphate synthase subunit HisF (253 aa).

Residues Asp-11 and Asp-130 contribute to the active site.

Belongs to the HisA/HisF family. In terms of assembly, heterodimer of HisH and HisF.

The protein localises to the cytoplasm. It catalyses the reaction 5-[(5-phospho-1-deoxy-D-ribulos-1-ylimino)methylamino]-1-(5-phospho-beta-D-ribosyl)imidazole-4-carboxamide + L-glutamine = D-erythro-1-(imidazol-4-yl)glycerol 3-phosphate + 5-amino-1-(5-phospho-beta-D-ribosyl)imidazole-4-carboxamide + L-glutamate + H(+). The protein operates within amino-acid biosynthesis; L-histidine biosynthesis; L-histidine from 5-phospho-alpha-D-ribose 1-diphosphate: step 5/9. In terms of biological role, IGPS catalyzes the conversion of PRFAR and glutamine to IGP, AICAR and glutamate. The HisF subunit catalyzes the cyclization activity that produces IGP and AICAR from PRFAR using the ammonia provided by the HisH subunit. The chain is Imidazole glycerol phosphate synthase subunit HisF from Geobacter sulfurreducens (strain ATCC 51573 / DSM 12127 / PCA).